The chain runs to 122 residues: Aspartate 1-decarboxylase (122 aa).

The Schiff-base intermediate with substrate; via pyruvic acid role is filled by serine 25. Pyruvic acid (Ser) is present on serine 25. Position 57 (threonine 57) interacts with substrate. The active-site Proton donor is the tyrosine 58. 73–75 contacts substrate; it reads GAA.

This sequence belongs to the PanD family. As to quaternary structure, heterooctamer of four alpha and four beta subunits. It depends on pyruvate as a cofactor. In terms of processing, is synthesized initially as an inactive proenzyme, which is activated by self-cleavage at a specific serine bond to produce a beta-subunit with a hydroxyl group at its C-terminus and an alpha-subunit with a pyruvoyl group at its N-terminus.

Its subcellular location is the cytoplasm. It carries out the reaction L-aspartate + H(+) = beta-alanine + CO2. The protein operates within cofactor biosynthesis; (R)-pantothenate biosynthesis; beta-alanine from L-aspartate: step 1/1. Catalyzes the pyruvoyl-dependent decarboxylation of aspartate to produce beta-alanine. The sequence is that of Aspartate 1-decarboxylase from Bordetella pertussis (strain Tohama I / ATCC BAA-589 / NCTC 13251).